Consider the following 161-residue polypeptide: Large ribosomal subunit protein uL15 (161 aa).

The segment at M1–L57 is disordered. Positions I23 to M35 are enriched in gly residues.

Belongs to the universal ribosomal protein uL15 family. As to quaternary structure, part of the 50S ribosomal subunit.

Its function is as follows. Binds to the 23S rRNA. This chain is Large ribosomal subunit protein uL15, found in Trichodesmium erythraeum (strain IMS101).